The sequence spans 118 residues: Large ribosomal subunit protein bL20c (118 aa).

The protein belongs to the bacterial ribosomal protein bL20 family.

The protein localises to the plastid. It localises to the chloroplast. Functionally, binds directly to 23S ribosomal RNA and is necessary for the in vitro assembly process of the 50S ribosomal subunit. It is not involved in the protein synthesizing functions of that subunit. This is Large ribosomal subunit protein bL20c from Adiantum capillus-veneris (Maidenhair fern).